A 63-amino-acid chain; its full sequence is Hirudin-P6 (63 aa).

The tract at residues 1-3 is interaction with thrombin active site; it reads MRY. 3 disulfides stabilise this stretch: C6/C14, C16/C28, and C22/C37. The span at 35-55 shows a compositional bias: basic and acidic residues; it reads KKCVEGEGTRKPQNEGQHDFD. The tract at residues 35–63 is disordered; that stretch reads KKCVEGEGTRKPQNEGQHDFDPIPEEYLS. T43 is a glycosylation site (O-linked (GalNAc...) threonine). An interaction with fibrinogen-binding exosite of thrombin region spans residues 53 to 63; it reads DFDPIPEEYLS. At Y61 the chain carries Sulfotyrosine.

It belongs to the protease inhibitor I14 (hirudin) family. Post-translationally, O-linked glycan consists of Fuc-Gal-GalNAc trisaccharide.

The protein resides in the secreted. In terms of biological role, hirudin is a potent thrombin-specific protease inhibitor. It forms a stable non-covalent complex with alpha-thrombin, thereby abolishing its ability to cleave fibrinogen. This is Hirudin-P6 from Hirudinaria manillensis (Asian medical leech).